The chain runs to 567 residues: Sensor histidine kinase MtrB (567 aa).

Over residues 1–15 (MIFGSRRRIRGRRGR) the composition is skewed to basic residues. The disordered stretch occupies residues 1–20 (MIFGSRRRIRGRRGRSGPMT). Transmembrane regions (helical) follow at residues 42–62 (VVAL…FVLT) and 213–233 (GTMA…ALLV). The HAMP domain maps to 235–287 (RQVVVPVRSASRIAERFAEGHLSERMPVRGEDDMARLAVSFNDMAESLSRQIA). One can recognise a Histidine kinase domain in the interval 302-519 (DVSHELRTPL…CFRLTLPMVR (218 aa)). Histidine 305 is modified (phosphohistidine; by autocatalysis). Over residues 529-551 (PMKPIPQPVLQPVAQPNPQPMPP) the composition is skewed to pro residues. Residues 529–567 (PMKPIPQPVLQPVAQPNPQPMPPEYKERQRPREHAEWSG) form a disordered region. The span at 552 to 567 (EYKERQRPREHAEWSG) shows a compositional bias: basic and acidic residues.

Interacts with MrtA. Interacts with LpqB, probably extracytoplasmically via MtrB's sensor domain. It depends on Mg(2+) as a cofactor. Ca(2+) serves as cofactor. The C-terminal domain (residues 234-567) autophosphorylates.

It is found in the cell membrane. It catalyses the reaction ATP + protein L-histidine = ADP + protein N-phospho-L-histidine.. Its activity is regulated as follows. Ca(2+) ions inhibit the phosphotransfer from MtrB to MtrA. Member of the two-component regulatory system MtrA/MtrB. Probably functions as a membrane-associated protein kinase that phosphorylates MtrA in response to environmental signals. Autophosphorylates and transfers phosphate to MtrA in vitro. Overexpression of MtrA alone decreases bacterial virulence in mouse infection; co-expression of MtrA and MtrB restores normal bacterial growth, suggesting that bacterial growth in macrophages requires an optimal ratio of MtrB to MtrA. Probably plays a role in cell division. The polypeptide is Sensor histidine kinase MtrB (mtrB) (Mycobacterium tuberculosis (strain ATCC 25618 / H37Rv)).